The primary structure comprises 538 residues: NAD(P)H-quinone oxidoreductase chain 4 (538 aa).

14 consecutive transmembrane segments (helical) span residues phenylalanine 11 to isoleucine 31, tyrosine 43 to phenylalanine 63, methionine 95 to valine 115, proline 119 to valine 139, leucine 143 to tryptophan 163, phenylalanine 175 to phenylalanine 195, glycine 217 to valine 237, threonine 251 to leucine 271, phenylalanine 285 to phenylalanine 305, isoleucine 314 to serine 334, alanine 340 to alanine 360, isoleucine 382 to isoleucine 404, isoleucine 425 to methionine 445, and isoleucine 472 to methionine 492.

Belongs to the complex I subunit 4 family.

It localises to the cellular thylakoid membrane. It carries out the reaction a plastoquinone + NADH + (n+1) H(+)(in) = a plastoquinol + NAD(+) + n H(+)(out). The enzyme catalyses a plastoquinone + NADPH + (n+1) H(+)(in) = a plastoquinol + NADP(+) + n H(+)(out). Functionally, NDH-1 shuttles electrons from NAD(P)H, via FMN and iron-sulfur (Fe-S) centers, to quinones in the respiratory chain. The immediate electron acceptor for the enzyme in this species is believed to be plastoquinone. Couples the redox reaction to proton translocation (for every two electrons transferred, four hydrogen ions are translocated across the cytoplasmic membrane), and thus conserves the redox energy in a proton gradient. The chain is NAD(P)H-quinone oxidoreductase chain 4 from Prochlorococcus marinus (strain NATL2A).